A 228-amino-acid polypeptide reads, in one-letter code: Outer membrane protein assembly factor BamE (228 aa).

The N-terminal stretch at 1-29 (MNPILKGVYSPARLGVVALTLFGILGVTG) is a signal peptide. Cys30 carries N-palmitoyl cysteine lipidation. The S-diacylglycerol cysteine moiety is linked to residue Cys30. The disordered stretch occupies residues 197–228 (DFFGSSKKDPDPQSPQLGPGTLNDVPKPADSK).

It belongs to the BamE family. Part of the Bam complex.

It is found in the cell outer membrane. Functionally, part of the outer membrane protein assembly complex, which is involved in assembly and insertion of beta-barrel proteins into the outer membrane. This Polynucleobacter necessarius subsp. necessarius (strain STIR1) protein is Outer membrane protein assembly factor BamE.